Reading from the N-terminus, the 126-residue chain is Large ribosomal subunit protein bL17 (126 aa).

This sequence belongs to the bacterial ribosomal protein bL17 family. Part of the 50S ribosomal subunit. Contacts protein L32.

The polypeptide is Large ribosomal subunit protein bL17 (Coxiella burnetii (strain CbuG_Q212) (Coxiella burnetii (strain Q212))).